Here is a 208-residue protein sequence, read N- to C-terminus: Small ribosomal subunit protein uS4 (208 aa).

The 62-residue stretch at 97-158 (TRLDNVIYRM…RAQKYLCVQE (62 aa)) folds into the S4 RNA-binding domain.

It belongs to the universal ribosomal protein uS4 family. As to quaternary structure, part of the 30S ribosomal subunit. Contacts protein S5. The interaction surface between S4 and S5 is involved in control of translational fidelity.

Its function is as follows. One of the primary rRNA binding proteins, it binds directly to 16S rRNA where it nucleates assembly of the body of the 30S subunit. With S5 and S12 plays an important role in translational accuracy. This is Small ribosomal subunit protein uS4 from Xylella fastidiosa (strain 9a5c).